A 168-amino-acid chain; its full sequence is Lipoprotein signal peptidase (168 aa).

The next 4 helical transmembrane spans lie at 15–35 (WLWL…IVME), 47–67 (VLPF…SFLS), 75–95 (WLFT…MSKL), and 107–127 (AMII…GFVV). Residues D128 and D146 contribute to the active site. The helical transmembrane segment at 141–161 (AFNLADTAICLGAAMIILDGF) threads the bilayer.

It belongs to the peptidase A8 family.

Its subcellular location is the cell inner membrane. It catalyses the reaction Release of signal peptides from bacterial membrane prolipoproteins. Hydrolyzes -Xaa-Yaa-Zaa-|-(S,diacylglyceryl)Cys-, in which Xaa is hydrophobic (preferably Leu), and Yaa (Ala or Ser) and Zaa (Gly or Ala) have small, neutral side chains.. It participates in protein modification; lipoprotein biosynthesis (signal peptide cleavage). In terms of biological role, this protein specifically catalyzes the removal of signal peptides from prolipoproteins. The sequence is that of Lipoprotein signal peptidase from Vibrio vulnificus (strain CMCP6).